A 349-amino-acid chain; its full sequence is tRNA pseudouridine synthase D (349 aa).

The tract at residues 1-22 (MTDAPLVTAELPGSGGSLRRSP) is disordered. Asp-78 (nucleophile) is an active-site residue. The region spanning 150 to 304 (GLPNLFGPQR…AEGTRRAARL (155 aa)) is the TRUD domain.

Belongs to the pseudouridine synthase TruD family.

It catalyses the reaction uridine(13) in tRNA = pseudouridine(13) in tRNA. In terms of biological role, responsible for synthesis of pseudouridine from uracil-13 in transfer RNAs. In Anaeromyxobacter sp. (strain Fw109-5), this protein is tRNA pseudouridine synthase D.